Consider the following 1197-residue polypeptide: Serine/threonine-protein kinase pakA (1197 aa).

Disordered regions lie at residues 1–96 (MEEK…PIYR), 328–383 (QKED…KNID), 430–468 (REEEEENEDRVERELASRRRQEEDRIKREEEEEEEEQRN), 485–543 (EEEE…NLMG), and 562–819 (NSSG…RVGT). The segment covering 19 to 30 (QKFEQFLDKTDK) has biased composition (basic and acidic residues). Residues 34–49 (ATRNNYRGPVSSSTGI) show a composition bias toward polar residues. Residues 51-69 (NDKEKKSHSYFKVREEGSN) are compositionally biased toward basic and acidic residues. Residues 70–79 (KRPSSFSASN) show a composition bias toward polar residues. Low complexity-rich tracts occupy residues 80 to 94 (PITPSSPQSTHSSPI) and 346 to 381 (NNNNNENNENDNNNNNNNNNNNNNNNNNNNNNNNKN). The segment covering 439-458 (RVERELASRRRQEEDRIKRE) has biased composition (basic and acidic residues). Over residues 494-523 (SQLQSSQQQQKSSSTQRSSNTVTSTSSSST) the composition is skewed to low complexity. A compositionally biased stretch (polar residues) spans 524-536 (GGDSNPSTSQKPT). Thr-585 carries the post-translational modification Phosphothreonine; by PKB. Over residues 593–615 (SENTPLVSSIDNNGVNNKMSRSH) the composition is skewed to polar residues. Composition is skewed to low complexity over residues 636-653 (NVNNSNNNNNNNNINNNH) and 671-707 (SSSMSTPSISPSQAGNSATSTVPSSPISASTSMSSPT). Over residues 718–727 (TTSTGSTRKG) the composition is skewed to polar residues. The span at 728 to 737 (SISEREDKKK) shows a compositional bias: basic and acidic residues. Residues 739–756 (SSSSTSSSSSSNGGLSSS) show a composition bias toward low complexity. Over residues 757-790 (GKDHKKDHSSEEKEKEKKSFFNKLFSKEKKDHHS) the composition is skewed to basic and acidic residues. The CRIB domain occupies 817 to 830 (VGTPFNVKHDVHVN). The region spanning 911–1164 (YYNINKIGEG…SSSLLHHPFL (254 aa)) is the Protein kinase domain. Residues 917-925 (IGEGGAGEV) and Lys-940 each bind ATP. Catalysis depends on Asp-1032, which acts as the Proton acceptor.

Belongs to the protein kinase superfamily. STE Ser/Thr protein kinase family. STE20 subfamily. It depends on Mg(2+) as a cofactor. Post-translationally, phosphorylation on Thr-585 results in cAMP-mediated activation and localization to the cytoskeleton. Colocalizes with myosin II to the cleavage furrow of cells undergoing cytokinesis and the posterior cortex of polarized cells.

It is found in the cytoplasm. It localises to the cytosol. The protein localises to the cytoskeleton. It carries out the reaction L-seryl-[protein] + ATP = O-phospho-L-seryl-[protein] + ADP + H(+). The catalysed reaction is L-threonyl-[protein] + ATP = O-phospho-L-threonyl-[protein] + ADP + H(+). Its function is as follows. Regulator of the myosin II component of the cytoskeleton: required for regulation of cytokinesis. Functions during chemotaxis, required for maintaining the direction of cell movement, suppressing lateral pseudopod extension, and proper retraction of the posterior of chemotaxing cells. In Dictyostelium discoideum (Social amoeba), this protein is Serine/threonine-protein kinase pakA (pakA).